The chain runs to 674 residues: Glutaminase kidney isoform, mitochondrial (674 aa).

Residues 1–54 (MMRLRGSAMLRELLLRPPAAVGAVLRRAQPLGTLCRRPRGGSRPTAGLVAAARL) constitute a mitochondrion transit peptide. Positions 56-123 (PWWGGGGRAK…PGETDAFGNS (68 aa)) are disordered. Over residues 58-71 (WGGGGRAKGPGAGG) the composition is skewed to gly residues. Residues 89-101 (PPQQQQQQQQQPG) show a composition bias toward low complexity. N6-succinyllysine is present on residues Lys135 and Lys169. A substrate-binding site is contributed by Ser291. Residue Lys316 is modified to N6-acetyllysine. A highly mobile activation loop region spans residues 320–327 (GLRFNKLF). Asn340, Glu386, Asn393, Tyr419, Tyr471, and Val489 together coordinate substrate. 2 ANK repeats span residues 590 to 619 (DSRT…VNPF) and 624 to 653 (WNNT…QYTP). Residues 652–674 (TPQGDSDDGKGNQTVHKNLDGLL) form a disordered region. Ser657 bears the Phosphoserine mark.

This sequence belongs to the glutaminase family. As to quaternary structure, homotetramer, dimer of dimers. The tetramers can assemble into rod-like oligomers (in vitro), but the physiological significance of this is not clear. Interacts with RAF1 and MAP2K2. Interacts with ATCAY; the interaction is direct and may control GLS localization, negatively regulating its activity. Post-translationally, synthesized as a 74-kDa cytosolic precursor which is proteolytically processed by the mitochondrial-processing peptidase (MPP) via a 72-kDa intermediate to yield the mature mitochondrial 68- and 65-kDa subunits.

It localises to the mitochondrion. Its subcellular location is the cytoplasm. The protein localises to the cytosol. The protein resides in the mitochondrion matrix. The catalysed reaction is L-glutamine + H2O = L-glutamate + NH4(+). Its activity is regulated as follows. Isoform 1 and isoform 2 are activated by phosphate, due to increased affinity for glutamine. At phosphate concentrations above 10 mM, isoform 2 is more efficient than isoform 1. Its function is as follows. Catalyzes the first reaction in the primary pathway for the renal catabolism of glutamine. Plays a role in maintaining acid-base homeostasis. Regulates the levels of the neurotransmitter glutamate, the main excitatory neurotransmitter in the brain. The polypeptide is Glutaminase kidney isoform, mitochondrial (Gls) (Mus musculus (Mouse)).